The following is a 194-amino-acid chain: Holliday junction branch migration complex subunit RuvA (194 aa).

The segment at 1–62 (MIGYLKGNVI…EDSLDLYGFK (62 aa)) is domain I. Positions 63–136 (TMEERELFET…KGKLKDMSGD (74 aa)) are domain II. The tract at residues 136–140 (DFEEP) is flexible linker. Residues 141–194 (LPDNRNTELSDALASLGYSELEIEEALSNADIKNNGSLEENIKKALGYLGSKGS) form a domain III region.

This sequence belongs to the RuvA family. Homotetramer. Forms an RuvA(8)-RuvB(12)-Holliday junction (HJ) complex. HJ DNA is sandwiched between 2 RuvA tetramers; dsDNA enters through RuvA and exits via RuvB. An RuvB hexamer assembles on each DNA strand where it exits the tetramer. Each RuvB hexamer is contacted by two RuvA subunits (via domain III) on 2 adjacent RuvB subunits; this complex drives branch migration. In the full resolvosome a probable DNA-RuvA(4)-RuvB(12)-RuvC(2) complex forms which resolves the HJ.

Its subcellular location is the cytoplasm. In terms of biological role, the RuvA-RuvB-RuvC complex processes Holliday junction (HJ) DNA during genetic recombination and DNA repair, while the RuvA-RuvB complex plays an important role in the rescue of blocked DNA replication forks via replication fork reversal (RFR). RuvA specifically binds to HJ cruciform DNA, conferring on it an open structure. The RuvB hexamer acts as an ATP-dependent pump, pulling dsDNA into and through the RuvAB complex. HJ branch migration allows RuvC to scan DNA until it finds its consensus sequence, where it cleaves and resolves the cruciform DNA. This is Holliday junction branch migration complex subunit RuvA from Halothermothrix orenii (strain H 168 / OCM 544 / DSM 9562).